The sequence spans 330 residues: Endochitinase Ziz m 1.0101 (330 aa).

Positions 1-24 (MVPQAKLVVASLILTSALIQTSEA) are cleaved as a signal peptide. One can recognise a GH18 domain in the interval 26–330 (GGIATYWGQY…LRTKFMYQNA (305 aa)). Disulfide bonds link C47/C90, C77/C80, and C187/C219. The segment at 72 to 86 (NISGHCSDCTFLGEE) is binds to IgE in 70% of the 10 patients tested allergic to Indian jujube and latex. Residues 292–301 (VWNRYYDLKT) form a binds to IgE in 100% of the 10 patients tested allergic to Indian jujube and latex; sufficient for prediction of the presence of allergic reactions in these patients region. Binds to IgE in 70% of the 10 patients tested allergic to Indian jujube and latex regions lie at residues 300–311 (KTNYSSSIILEY) and 309–320 (LEYVNSGTKYLP).

Belongs to the glycosyl hydrolase 18 family. Chitinase class II subfamily.

It localises to the secreted. It carries out the reaction Random endo-hydrolysis of N-acetyl-beta-D-glucosaminide (1-&gt;4)-beta-linkages in chitin and chitodextrins.. Functionally, defense against chitin containing fungal pathogens. This Ziziphus mauritiana (Indian jujube) protein is Endochitinase Ziz m 1.0101.